The following is a 252-amino-acid chain: Putative hydro-lyase OB3382 (252 aa).

The protein belongs to the D-glutamate cyclase family.

In Oceanobacillus iheyensis (strain DSM 14371 / CIP 107618 / JCM 11309 / KCTC 3954 / HTE831), this protein is Putative hydro-lyase OB3382.